A 262-amino-acid polypeptide reads, in one-letter code: Tryptophan synthase alpha chain (262 aa).

Residues Glu-51 and Asp-62 each act as proton acceptor in the active site.

Belongs to the TrpA family. As to quaternary structure, tetramer of two alpha and two beta chains.

It catalyses the reaction (1S,2R)-1-C-(indol-3-yl)glycerol 3-phosphate + L-serine = D-glyceraldehyde 3-phosphate + L-tryptophan + H2O. Its pathway is amino-acid biosynthesis; L-tryptophan biosynthesis; L-tryptophan from chorismate: step 5/5. Its function is as follows. The alpha subunit is responsible for the aldol cleavage of indoleglycerol phosphate to indole and glyceraldehyde 3-phosphate. This is Tryptophan synthase alpha chain from Oceanobacillus iheyensis (strain DSM 14371 / CIP 107618 / JCM 11309 / KCTC 3954 / HTE831).